The primary structure comprises 335 residues: Phenylalanine--tRNA ligase alpha subunit (335 aa).

Glu-262 lines the Mg(2+) pocket.

This sequence belongs to the class-II aminoacyl-tRNA synthetase family. Phe-tRNA synthetase alpha subunit type 1 subfamily. Tetramer of two alpha and two beta subunits. Mg(2+) serves as cofactor.

The protein resides in the cytoplasm. It carries out the reaction tRNA(Phe) + L-phenylalanine + ATP = L-phenylalanyl-tRNA(Phe) + AMP + diphosphate + H(+). This Prochlorococcus marinus (strain MIT 9313) protein is Phenylalanine--tRNA ligase alpha subunit.